The sequence spans 285 residues: Diaminopimelate epimerase (285 aa).

Residues asparagine 14 and asparagine 67 each coordinate substrate. The active-site Proton donor is the cysteine 76. Substrate-binding positions include 77–78 (GN), asparagine 166, asparagine 199, and 217–218 (ER). Catalysis depends on cysteine 226, which acts as the Proton acceptor. 227–228 (GT) contacts substrate.

The protein belongs to the diaminopimelate epimerase family. Homodimer.

It localises to the cytoplasm. It carries out the reaction (2S,6S)-2,6-diaminopimelate = meso-2,6-diaminopimelate. It functions in the pathway amino-acid biosynthesis; L-lysine biosynthesis via DAP pathway; DL-2,6-diaminopimelate from LL-2,6-diaminopimelate: step 1/1. In terms of biological role, catalyzes the stereoinversion of LL-2,6-diaminopimelate (L,L-DAP) to meso-diaminopimelate (meso-DAP), a precursor of L-lysine and an essential component of the bacterial peptidoglycan. This is Diaminopimelate epimerase from Bacillus licheniformis (strain ATCC 14580 / DSM 13 / JCM 2505 / CCUG 7422 / NBRC 12200 / NCIMB 9375 / NCTC 10341 / NRRL NRS-1264 / Gibson 46).